The sequence spans 1526 residues: Cell wall protein IFF4 (1526 aa).

A signal peptide spans 1-20; that stretch reads MKFLQKFIITVALLTNIVFA. N-linked (GlcNAc...) asparagine glycosylation is found at Asn-93 and Asn-498. Residues 512-541 are disordered; it reads SSAGGSSFPEETHMLQTSDSDLSSTAGSES. The segment covering 525–541 has biased composition (polar residues); it reads MLQTSDSDLSSTAGSES. An N-linked (GlcNAc...) asparagine glycan is attached at Asn-637. The segment at 1180–1207 is disordered; sequence WNGAKSDSPHTSESDITSQYNSHSTSVA. Polar residues predominate over residues 1193-1207; it reads SDITSQYNSHSTSVA. N-linked (GlcNAc...) asparagine glycosylation is found at Asn-1451, Asn-1463, Asn-1479, Asn-1502, and Asn-1506. The segment at 1455–1483 is disordered; it reads SSVSGYPTNRSDSNGYANTPTTGSNTSGD. Residue Asn-1502 is the site of GPI-anchor amidated asparagine attachment. Positions 1503-1526 are cleaved as a propeptide — removed in mature form; that stretch reads GSTNISNKYLKFLGTVVSILILLI.

This sequence belongs to the HYR1/IFF family. Post-translationally, the GPI-anchor is attached to the protein in the endoplasmic reticulum and serves to target the protein to the cell surface. There, the glucosamine-inositol phospholipid moiety is cleaved off and the GPI-$modified mannoprotein is covalently attached via its lipidless GPI glycan remnant to the 1,6-beta-glucan of the outer cell wall layer.

It localises to the secreted. It is found in the cell wall. Its subcellular location is the membrane. GPI-anchored cell wall protein involved in cell wall organization, hyphal growth, as well as in host-fungal interaction and virulence. Plays a role in adherence to plastic and to host epithelial cells. Promotes the tissue fungal burden during murine vaginal candidiasis. Also increases susceptibility to neutrophil-mediated killing. Furthermore, contributes to the severity of hematogenously disseminated candidiasis in normal mice, but not in neutropenic mice. The polypeptide is Cell wall protein IFF4 (IFF4) (Candida albicans (strain SC5314 / ATCC MYA-2876) (Yeast)).